We begin with the raw amino-acid sequence, 858 residues long: Neural cell adhesion molecule 1 (858 aa).

The signal sequence occupies residues 1-19 (MLRTKDLIWTLFFLGTAVS). Ig-like C2-type domains lie at 20–111 (LQVD…ATVN), 116–205 (QKLM…KDIQ), 212–302 (PTVQ…ASIH), 309–414 (PKIT…LEVQ), and 417–502 (PKLQ…ESLE). The Extracellular portion of the chain corresponds to 20 to 721 (LQVDIVPSQG…NGSPTAGLST (702 aa)). Cystine bridges form between cysteine 41–cysteine 96 and cysteine 139–cysteine 189. Residues 152–156 (KHKGR) and 161–165 (KKDVR) each bind heparin. A glycan (N-linked (GlcNAc...) asparagine) is linked at asparagine 222. A disulfide bridge connects residues cysteine 235 and cysteine 288. N-linked (GlcNAc...) asparagine glycans are attached at residues asparagine 316, asparagine 348, asparagine 434, asparagine 460, and asparagine 489. A disulfide bridge links cysteine 330 with cysteine 396. Cysteine 437 and cysteine 490 are joined by a disulfide. Fibronectin type-III domains are found at residues 510-609 (TPSS…TQPV) and 611-706 (EPSA…SAQP). The helical transmembrane segment at 722 to 739 (GAIVGILIVIFVLLLVVM) threads the bilayer. Residues 740–858 (DITCYFLNKC…TQTKENESKA (119 aa)) are Cytoplasmic-facing. Residues 765–858 (PGAKGKDMEE…TQTKENESKA (94 aa)) are disordered. Composition is skewed to basic and acidic residues over residues 768-809 (KGKD…HTEP) and 817-834 (EPEK…ESEA). 2 positions are modified to phosphoserine: serine 780 and serine 784.

Interacts with MDK. Found in a complex with SLC39A6, SLC39A10 and with NCAM1; this complex controls NCAM1 phosphorylation and integration into focal adhesion complexes during epithelial-tomesenchymal transition. Interacts with synaptic plasticity regulator PANTS. Post-translationally, polysialylated by ST8SIA2 and ST8SIA4. Polysialylation modulates cell interactions by confering both attractive and repulsive properties that are highly regulated by ST8SIA2 and ST8SIA4. Polysialylation is formed on a-2,3-linked sialic acid of core glycans.

The protein localises to the cell membrane. Functionally, this protein is a cell adhesion molecule involved in neuron-neuron adhesion, neurite fasciculation, outgrowth of neurites, etc. The protein is Neural cell adhesion molecule 1 of Rattus norvegicus (Rat).